The sequence spans 802 residues: Copal-8-ol diphosphate hydratase, chloroplastic (802 aa).

Residues 1-24 (MQVIITSSHRFFCHHLHQLKSPTS) constitute a chloroplast transit peptide. Lysine 249 contributes to the substrate binding site. Mg(2+) is bound by residues aspartate 382 and aspartate 384. Positions 382–385 (DVDD) match the DXDD motif motif. A substrate-binding site is contributed by lysine 468.

Belongs to the terpene synthase family. It depends on Mg(2+) as a cofactor. Expressed specifically in the secretory cells of the glandular trichomes.

It is found in the plastid. The protein resides in the chloroplast. It catalyses the reaction (2E,6E,10E)-geranylgeranyl diphosphate + H2O = 8-hydroxycopalyl diphosphate. Its pathway is secondary metabolite biosynthesis; terpenoid biosynthesis. Class-II terpene synthase that synthesizes 8-hydroxy-copalyl diphosphate. Involved in the biosynthesis of cis-abienol, a labdane diterpene that can be used as synthesis precursor of ambergris substitution fragance products. This Nicotiana tabacum (Common tobacco) protein is Copal-8-ol diphosphate hydratase, chloroplastic.